Here is a 254-residue protein sequence, read N- to C-terminus: UPF0246 protein FTW_0267 (254 aa).

The protein belongs to the UPF0246 family.

The sequence is that of UPF0246 protein FTW_0267 from Francisella tularensis subsp. tularensis (strain WY96-3418).